The sequence spans 312 residues: Borealin-2 (312 aa).

Residues 1–10 (MPPRKAPAKR) are compositionally biased toward basic residues. Positions 1–26 (MPPRKAPAKRRSTDSGVERDRGALSQ) are disordered. Over residues 11-26 (RSTDSGVERDRGALSQ) the composition is skewed to basic and acidic residues.

The protein belongs to the borealin family. Component of the CPC complex.

It is found in the nucleus. The protein resides in the chromosome. It localises to the centromere. Component of the chromosomal passenger complex (CPC), a complex that acts as a key regulator of mitosis. The CPC complex has essential functions at the centromere in ensuring correct chromosome alignment and segregation and is required for chromatin-induced microtubule stabilization and spindle assembly. This Gallus gallus (Chicken) protein is Borealin-2.